The sequence spans 276 residues: Small ribosomal subunit protein uS2 (276 aa).

Disordered regions lie at residues 209-233 (AQEA…AADV) and 252-276 (VDWS…SSWE). Over residues 211 to 231 (EAAAAAQAAKETAEPTTEGAA) the composition is skewed to low complexity.

It belongs to the universal ribosomal protein uS2 family. In terms of assembly, component of the small ribosomal subunit. Mature ribosomes consist of a small (40S) and a large (60S) subunit. The 40S subunit contains about 33 different proteins and 1 molecule of RNA (18S). The 60S subunit contains about 49 different proteins and 3 molecules of RNA (25S, 5.8S and 5S). Interacts with RPS21.

It is found in the cytoplasm. Required for the assembly and/or stability of the 40S ribosomal subunit. Required for the processing of the 20S rRNA-precursor to mature 18S rRNA in a late step of the maturation of 40S ribosomal subunits. This chain is Small ribosomal subunit protein uS2, found in Mycosarcoma maydis (Corn smut fungus).